We begin with the raw amino-acid sequence, 60 residues long: Large ribosomal subunit protein bL32 (60 aa).

Positions 1-60 are disordered; it reads MAVQQNKKSRSARDMRRSHDALSENALSVEKTTGEVHLRHHVSPEGVYRGRKVVDKGADE. A compositionally biased stretch (basic and acidic residues) spans 11–22; the sequence is SARDMRRSHDAL.

The protein belongs to the bacterial ribosomal protein bL32 family.

This Pseudomonas putida (strain ATCC 700007 / DSM 6899 / JCM 31910 / BCRC 17059 / LMG 24140 / F1) protein is Large ribosomal subunit protein bL32.